The chain runs to 209 residues: Virulence factors putative positive transcription regulator BvgA (209 aa).

Residues 4-119 enclose the Response regulatory domain; it reads KVLIIDDHPV…EVINAAKAVM (116 aa). Residue aspartate 54 is modified to 4-aspartylphosphate. Residues 142–207 form the HTH luxR-type domain; that stretch reads DSTLISVLSN…ELIDLAKRNN (66 aa). The H-T-H motif DNA-binding region spans 166–185; sequence NKDIADSMFLSNKTVSTYKT.

As to quaternary structure, homodimer. Post-translationally, phosphorylated by BvgS.

In terms of biological role, member of the two-component regulatory system BvgS/BvgA. Activates the transcription of virulence genes. This is Virulence factors putative positive transcription regulator BvgA (bvgA) from Bordetella bronchiseptica (strain ATCC BAA-588 / NCTC 13252 / RB50) (Alcaligenes bronchisepticus).